The primary structure comprises 179 residues: M-zodatoxin-Lt4b (179 aa).

An N-terminal signal peptide occupies residues 1 to 22 (MKFSIIALALAVAFVCVAESRS). The propeptide occupies 23–43 (EEEGYDVSEEIQAEELEEAAR). The Processing quadruplet motif 1 signature appears at 40-43 (EAAR). Gln-61 carries the glutamine amide modification. An Inverted processing quadruplet motif 1 motif is present at residues 63–66 (REDS). The propeptide occupies 63 to 71 (REDSEDAGR). Residues 68–71 (DAGR) carry the Processing quadruplet motif 2 motif. Gln-89 carries the post-translational modification Glutamine amide. The Inverted processing quadruplet motif 2 signature appears at 91-94 (REDT). A propeptide spanning residues 91–99 (REDTEEAGR) is cleaved from the precursor. Positions 96–99 (EAGR) match the Processing quadruplet motif 3 motif. Gln-117 is modified (glutamine amide). Positions 119–122 (REDS) match the Inverted processing quadruplet motif 3 motif. Residues 119–127 (REDSEEAGR) constitute a propeptide that is removed on maturation. The Processing quadruplet motif 4 motif lies at 124–127 (EAGR). Gln-145 is modified (glutamine amide). The Inverted processing quadruplet motif 4 signature appears at 147–150 (REDT). Residues 147–154 (REDTEEAR) constitute a propeptide that is removed on maturation. The short motif at 151–154 (EEAR) is the Processing quadruplet motif 5 element. Phe-178 is subject to Phenylalanine amide.

This sequence belongs to the cationic peptide 03 (latarcin) family. 04 subfamily. In terms of processing, cleavage of the propeptide depends on the processing quadruplet motif (PQM) (XXXR, with at least one of X being E) and the inverted PQM (RXXX, with at least one of X being E). As to expression, expressed by the venom gland.

The protein localises to the secreted. In terms of biological role, M-zodatoxin-Lt4b: Has antimicrobial activity against Gram-positive bacteria (A.globiformis VKM Ac-1112 (MIC=0.3 uM), and B.subtilis VKM B-501 (MIC=1.1 uM)), Gram-negative bacteria (E.coli DH5-alpha (MIC=4.4 uM), E.coli MH1 (MIC=4.4 uM), and P.aeruginosa PAO1 (MIC=&gt;35 uM)), and yeasts (P.pastoris GS115 (MIC=&gt;35 uM), and S.cerevisiae Y190 (MIC=35 uM)). Does not have hemolytic activity against rabbit erythrocytes. Causes paralysis, but is not lethal when injected into insect (M.domestica) larvae. Shows no antimicrobial activity against Gram-positive bacterium B.subtilis B-501 or Gram-negative bacterium E.coli DH5-alpha at concentration up to 20 uM. This Lachesana tarabaevi (Spider) protein is M-zodatoxin-Lt4b.